The primary structure comprises 356 residues: Protein MGF 360-3L (356 aa).

Residues 61–93 (KLNTALVLAVKENNEDLIMLFTEWGANINYGLL) form an ANK repeat.

This sequence belongs to the asfivirus MGF 360 family.

In terms of biological role, plays a role in virus cell tropism, and may be required for efficient virus replication in macrophages. This is Protein MGF 360-3L from African swine fever virus (strain Badajoz 1971 Vero-adapted) (Ba71V).